Consider the following 470-residue polypeptide: MNPNQKIITIGSVSLGLVVLNILLHIVSITITVLVLPGNGNNGSCNGTVIREYNETVRIEKVTQWHNTNVIEYIERSESDHFMNNTEALCDAKGFAPFSKDNGIRIGSRGHVFVIREPFVSCSPTECRTFFLTQGSLLNDKHSNGTVKDRSPYRTLMSVEIGQSPNVYQARFEAVAWSATACHDGKKWMTIGVTGPDAKAVAVVHYGGIPTDVINSWAGDILRTQESSCTCIKGECYWVMTDGPANRQAQYRAFKAKQGKIIGQAEISFNGGHIEECSCYPNEGKVECVCRDNWTGTNRPVLVISPDLSYRVGYLCAGLPSDTPRGEDSQFTGSCTSPMGNQGYGVKGFGFRQGNDVWMGRTISRTSRSGFEILKVRNGWVQNSKEQIKRQVVVDNLNWSGYSGSFTLPVELTKRNCLVPCFWVEMIRGKPEEKTIWTSSSSIVMCGVDHEIADWSWHDGAILPFDIDKM.

Residues 1-14 (MNPNQKIITIGSVS) are Intravirion-facing. The interval 11–32 (GSVSLGLVVLNILLHIVSITIT) is involved in apical transport and lipid raft association. A helical transmembrane segment spans residues 15-35 (LGLVVLNILLHIVSITITVLV). Residues 32–86 (TVLVLPGNGNNGSCNGTVIREYNETVRIEKVTQWHNTNVIEYIERSESDHFMNNT) are hypervariable stalk region. Over 36-470 (LPGNGNNGSC…AILPFDIDKM (435 aa)) the chain is Virion surface. Residues asparagine 42, asparagine 46, asparagine 54, and asparagine 84 are each glycosylated (N-linked (GlcNAc...) asparagine; by host). The head of neuraminidase stretch occupies residues 89–470 (LCDAKGFAPF…AILPFDIDKM (382 aa)). Disulfide bonds link cysteine 90–cysteine 417, cysteine 122–cysteine 127, cysteine 182–cysteine 229, cysteine 231–cysteine 236, cysteine 277–cysteine 290, cysteine 279–cysteine 288, cysteine 316–cysteine 335, and cysteine 421–cysteine 446. Arginine 116 serves as a coordination point for substrate. Asparagine 144 is a glycosylation site (N-linked (GlcNAc...) asparagine; by host). Aspartate 149 functions as the Proton donor/acceptor in the catalytic mechanism. A substrate-binding site is contributed by arginine 150. 275–276 (EE) lines the substrate pocket. Arginine 291 is a substrate binding site. Position 292 (aspartate 292) interacts with Ca(2+). An N-linked (GlcNAc...) asparagine; by host glycan is attached at asparagine 293. 2 residues coordinate Ca(2+): glycine 296 and aspartate 322. Residue arginine 368 participates in substrate binding. The N-linked (GlcNAc...) asparagine; by host glycan is linked to asparagine 398. The Nucleophile role is filled by tyrosine 402.

The protein belongs to the glycosyl hydrolase 34 family. As to quaternary structure, homotetramer. Ca(2+) serves as cofactor. Post-translationally, N-glycosylated.

The protein resides in the virion membrane. Its subcellular location is the host apical cell membrane. It carries out the reaction Hydrolysis of alpha-(2-&gt;3)-, alpha-(2-&gt;6)-, alpha-(2-&gt;8)- glycosidic linkages of terminal sialic acid residues in oligosaccharides, glycoproteins, glycolipids, colominic acid and synthetic substrates.. Its activity is regulated as follows. Inhibited by the neuraminidase inhibitors zanamivir (Relenza) and oseltamivir (Tamiflu). These drugs interfere with the release of progeny virus from infected cells and are effective against all influenza strains. Resistance to neuraminidase inhibitors is quite rare. Its function is as follows. Catalyzes the removal of terminal sialic acid residues from viral and cellular glycoconjugates. Cleaves off the terminal sialic acids on the glycosylated HA during virus budding to facilitate virus release. Additionally helps virus spread through the circulation by further removing sialic acids from the cell surface. These cleavages prevent self-aggregation and ensure the efficient spread of the progeny virus from cell to cell. Otherwise, infection would be limited to one round of replication. Described as a receptor-destroying enzyme because it cleaves a terminal sialic acid from the cellular receptors. May facilitate viral invasion of the upper airways by cleaving the sialic acid moieties on the mucin of the airway epithelial cells. Likely to plays a role in the budding process through its association with lipid rafts during intracellular transport. May additionally display a raft-association independent effect on budding. Plays a role in the determination of host range restriction on replication and virulence. Sialidase activity in late endosome/lysosome traffic seems to enhance virus replication. This Aves (Horse) protein is Neuraminidase.